Reading from the N-terminus, the 312-residue chain is DNA-directed RNA polymerase subunit alpha (312 aa).

Positions Met1–Asp226 are alpha N-terminal domain (alpha-NTD). The segment at Lys243–Asp312 is alpha C-terminal domain (alpha-CTD).

This sequence belongs to the RNA polymerase alpha chain family. As to quaternary structure, homodimer. The RNAP catalytic core consists of 2 alpha, 1 beta, 1 beta' and 1 omega subunit. When a sigma factor is associated with the core the holoenzyme is formed, which can initiate transcription.

The enzyme catalyses RNA(n) + a ribonucleoside 5'-triphosphate = RNA(n+1) + diphosphate. In terms of biological role, DNA-dependent RNA polymerase catalyzes the transcription of DNA into RNA using the four ribonucleoside triphosphates as substrates. The chain is DNA-directed RNA polymerase subunit alpha from Lactobacillus delbrueckii subsp. bulgaricus (strain ATCC 11842 / DSM 20081 / BCRC 10696 / JCM 1002 / NBRC 13953 / NCIMB 11778 / NCTC 12712 / WDCM 00102 / Lb 14).